The chain runs to 62 residues: MLSEEEIEYRRRDARNALASQRLEGLEPDPQVVAQMERVVVGELETSDVIKDLMERIKREEI.

The short motif at Ser20–Gly25 is the Inhibitory (S/T)XXXE(G/N) motif element. Glu24 serves as a coordination point for ATP.

As to quaternary structure, interacts with VbhT.

Its function is as follows. Antitoxin component of type II toxin-antitoxin (TA) system VbhT-VbhA. Acts by inhibiting the adenylyltransferase activity of VbhT; competes with ATP-binding and prevents productive ATP-binding to VbhT. The chain is Antitoxin VbhA from Bartonella schoenbuchensis (strain DSM 13525 / NCTC 13165 / R1).